The chain runs to 271 residues: 5-deoxy-glucuronate isomerase (271 aa).

Belongs to the isomerase IolB family.

It carries out the reaction 5-deoxy-D-glucuronate = 5-dehydro-2-deoxy-D-gluconate. The protein operates within polyol metabolism; myo-inositol degradation into acetyl-CoA; acetyl-CoA from myo-inositol: step 4/7. Functionally, involved in the isomerization of 5-deoxy-glucuronate (5DG) to 5-dehydro-2-deoxy-D-gluconate (DKG or 2-deoxy-5-keto-D-gluconate). The protein is 5-deoxy-glucuronate isomerase of Bacillus subtilis subsp. natto.